The chain runs to 292 residues: Formamidopyrimidine-DNA glycosylase (292 aa).

The Schiff-base intermediate with DNA role is filled by Pro-2. The active-site Proton donor is Glu-3. Catalysis depends on Lys-58, which acts as the Proton donor; for beta-elimination activity. DNA contacts are provided by His-103, Arg-122, and Lys-165. The FPG-type zinc-finger motif lies at 256 to 292 (RVYDRALHPCPTPGCKGEISRITQGGRSSFFCSMCQK). Arg-282 (proton donor; for delta-elimination activity) is an active-site residue.

The protein belongs to the FPG family. As to quaternary structure, monomer. Zn(2+) serves as cofactor.

It catalyses the reaction Hydrolysis of DNA containing ring-opened 7-methylguanine residues, releasing 2,6-diamino-4-hydroxy-5-(N-methyl)formamidopyrimidine.. It carries out the reaction 2'-deoxyribonucleotide-(2'-deoxyribose 5'-phosphate)-2'-deoxyribonucleotide-DNA = a 3'-end 2'-deoxyribonucleotide-(2,3-dehydro-2,3-deoxyribose 5'-phosphate)-DNA + a 5'-end 5'-phospho-2'-deoxyribonucleoside-DNA + H(+). Its function is as follows. Involved in base excision repair of DNA damaged by oxidation or by mutagenic agents. Acts as a DNA glycosylase that recognizes and removes damaged bases. Has a preference for oxidized purines, such as 7,8-dihydro-8-oxoguanine (8-oxoG). Has AP (apurinic/apyrimidinic) lyase activity and introduces nicks in the DNA strand. Cleaves the DNA backbone by beta-delta elimination to generate a single-strand break at the site of the removed base with both 3'- and 5'-phosphates. In Methylocella silvestris (strain DSM 15510 / CIP 108128 / LMG 27833 / NCIMB 13906 / BL2), this protein is Formamidopyrimidine-DNA glycosylase.